Consider the following 542-residue polypeptide: Chaperonin GroEL (542 aa).

Residues 29–32 (TLGP), 86–90 (DGTTT), Gly413, 476–478 (NAA), and Asp492 contribute to the ATP site.

This sequence belongs to the chaperonin (HSP60) family. As to quaternary structure, forms a cylinder of 14 subunits composed of two heptameric rings stacked back-to-back. Interacts with the co-chaperonin GroES.

It is found in the cytoplasm. The catalysed reaction is ATP + H2O + a folded polypeptide = ADP + phosphate + an unfolded polypeptide.. Together with its co-chaperonin GroES, plays an essential role in assisting protein folding. The GroEL-GroES system forms a nano-cage that allows encapsulation of the non-native substrate proteins and provides a physical environment optimized to promote and accelerate protein folding. The polypeptide is Chaperonin GroEL (Lactococcus lactis subsp. cremoris (strain SK11)).